The primary structure comprises 525 residues: uncharacterized protein (525 aa).

The first 21 residues, 1–21, serve as a signal peptide directing secretion; that stretch reads MLECLSALLVLFAGGGGSVLA. At 22–448 the chain is on the extracellular side; sequence AVQSKTVADP…ISAASQLDER (427 aa). The interval 242 to 264 is disordered; that stretch reads KVSSENCSKDTDDKSGSKKERNT. Residues 449-469 traverse the membrane as a helical segment; it reads IFIFTAITVSITTLMMLGFSY. The Cytoplasmic portion of the chain corresponds to 470–525; sequence RSRVSFRDHSIDDSDDDNDWSDDEVEFDEEYFYSLPVSIPEKGISLDKMAQQLGVE.

The protein resides in the membrane. This is an uncharacterized protein from Saccharomyces cerevisiae (strain RM11-1a) (Baker's yeast).